We begin with the raw amino-acid sequence, 382 residues long: MAELRGILLLLLYMSHSSSAICGIQKANIVDQLHENLVSSTEFPWVVSIQDKQYTHLAFGCILSEFWILSTASALQNRKEVIAVVGIANMDPRNADHKEYSINAIIPHENFNNNSMRNNIALLRTDSAIHFDDLVQPICFLGKSLHKPTALKNCWVAGWNPTSATGNHMTMSILRRISVNDIEVCPLHRQQKTECASHTNKDSNVCLGEPGNPMMCQVKKLDLWILRGLLAYGSDLCPGLLLYTSVDDYSNWIIAKTRKAGPPLSSIHPWEKLVLELPFHQSNIALTKNSYSVHSYAWPQSYSQGLRMSTMYDKQKDVWQNLRVNGQQEAGRPSNVAIQPMYYDYYGGEAGEGRAVAGQNRLHWSQERILMSFVLVFLGSGV.

Positions 1–20 (MAELRGILLLLLYMSHSSSA) are cleaved as a signal peptide. Residues 29–258 (IVDQLHENLV…YSNWIIAKTR (230 aa)) enclose the Peptidase S1 domain. N-linked (GlcNAc...) asparagine glycosylation is present at Asn113. 3 disulfides stabilise this stretch: Cys154–Cys216, Cys185–Cys195, and Cys206–Cys237.

The protein belongs to the peptidase S1 family. Plasma kallikrein subfamily.

It is found in the secreted. The protein is Inactive serine protease 54 (Prss54) of Rattus norvegicus (Rat).